The chain runs to 281 residues: CLA biosynthesis isomerase (281 aa).

This sequence belongs to the ADC family.

It localises to the cytoplasm. The enzyme catalyses 10-oxo-(12Z)-octadecenoate = 10-oxo-(11E)-octadecenoate. Its pathway is lipid metabolism; fatty acid metabolism. Its function is as follows. Is involved in a saturation metabolic pathway of polyunsaturated fatty acids, that detoxifies unsaturated fatty acids and generates hydroxy fatty acids, oxo fatty acids, conjugated fatty acids such as conjugated linoleic acids (CLAs), and partially saturated trans-fatty acids as intermediates. CLA-DC catalyzes the migration of the carbon-carbon double bond in 10-oxo-(12Z)-octadecenoate to produce 10-oxo-(11E)-octadecenoate, during linoleate metabolism. As part of the gut microbiome, this enzyme modifies host fatty acid composition and is expected to improve human health by altering lipid metabolism related to the onset of metabolic syndrome. This chain is CLA biosynthesis isomerase, found in Lactiplantibacillus plantarum (Lactobacillus plantarum).